We begin with the raw amino-acid sequence, 216 residues long: MECSQEDVVNDFIALEKIGSEVDINLDGVIKSKECSNTNEADIISNLITAIEESLSCTSVCTAVSLETVAQKLDAYADPSLNTQMSFSTASDLSSMEQDYVKASDDPFDLNHQPSPLQVWRDQGKITGFQMMCDDQKVTVVDSLECLAQSEQHLEPVYFDPRVNLAIPCPPDDFEILEDYGSTSNASVNSDDASTAELGPTSEEFEEWVRKIEQNY.

Positions 182 to 193 are enriched in polar residues; that stretch reads STSNASVNSDDA. The tract at residues 182–204 is disordered; that stretch reads STSNASVNSDDASTAELGPTSEE.

This is an uncharacterized protein from Caenorhabditis elegans.